We begin with the raw amino-acid sequence, 157 residues long: Succinate dehydrogenase assembly factor 2-B, mitochondrial (157 aa).

A mitochondrion-targeting transit peptide spans 1-24; it reads MLRQFLFSTASRRLVRPMIAPHRS.

It belongs to the SDHAF2 family. As to quaternary structure, interacts with the flavoprotein subunit within the SDH catalytic dimer.

It localises to the mitochondrion matrix. Functionally, plays an essential role in the assembly of succinate dehydrogenase (SDH), an enzyme complex (also referred to as respiratory complex II) that is a component of both the tricarboxylic acid (TCA) cycle and the mitochondrial electron transport chain, and which couples the oxidation of succinate to fumarate with the reduction of ubiquinone (coenzyme Q) to ubiquinol. Required for flavinylation (covalent attachment of FAD) of the flavoprotein subunit of the SDH catalytic dimer. The protein is Succinate dehydrogenase assembly factor 2-B, mitochondrial of Drosophila persimilis (Fruit fly).